We begin with the raw amino-acid sequence, 283 residues long: 2-dehydro-3-deoxyphosphooctonate aldolase (283 aa).

Belongs to the KdsA family.

The protein resides in the cytoplasm. The enzyme catalyses D-arabinose 5-phosphate + phosphoenolpyruvate + H2O = 3-deoxy-alpha-D-manno-2-octulosonate-8-phosphate + phosphate. It participates in carbohydrate biosynthesis; 3-deoxy-D-manno-octulosonate biosynthesis; 3-deoxy-D-manno-octulosonate from D-ribulose 5-phosphate: step 2/3. It functions in the pathway bacterial outer membrane biogenesis; lipopolysaccharide biosynthesis. The chain is 2-dehydro-3-deoxyphosphooctonate aldolase from Laribacter hongkongensis (strain HLHK9).